The primary structure comprises 492 residues: Bifunctional protein GlmU (492 aa).

The interval 1-238 (MRDAAVVILA…AALVAGVNDR (238 aa)) is pyrophosphorylase. UDP-N-acetyl-alpha-D-glucosamine is bound by residues 9-12 (LAAG), K23, Q80, and 85-86 (GT). D111 contributes to the Mg(2+) binding site. Residues G148, E163, N178, and N236 each coordinate UDP-N-acetyl-alpha-D-glucosamine. N236 contacts Mg(2+). The segment at 239–259 (VQLADLAAVLNRRIVEGHQRA) is linker. Positions 260–492 (GVTIIDPAST…EDQGPEATGE (233 aa)) are N-acetyltransferase. The UDP-N-acetyl-alpha-D-glucosamine site is built by R341 and K359. H371 (proton acceptor) is an active-site residue. 2 residues coordinate UDP-N-acetyl-alpha-D-glucosamine: Y374 and N385. Residues A388, 394-395 (NY), S413, and A431 contribute to the acetyl-CoA site. Low complexity predominate over residues 469–483 (EAAAAAGAGAGAAAE). The tract at residues 469–492 (EAAAAAGAGAGAAAEDQGPEATGE) is disordered.

In the N-terminal section; belongs to the N-acetylglucosamine-1-phosphate uridyltransferase family. It in the C-terminal section; belongs to the transferase hexapeptide repeat family. In terms of assembly, homotrimer. It depends on Mg(2+) as a cofactor.

The protein resides in the cytoplasm. It carries out the reaction alpha-D-glucosamine 1-phosphate + acetyl-CoA = N-acetyl-alpha-D-glucosamine 1-phosphate + CoA + H(+). The catalysed reaction is N-acetyl-alpha-D-glucosamine 1-phosphate + UTP + H(+) = UDP-N-acetyl-alpha-D-glucosamine + diphosphate. It functions in the pathway nucleotide-sugar biosynthesis; UDP-N-acetyl-alpha-D-glucosamine biosynthesis; N-acetyl-alpha-D-glucosamine 1-phosphate from alpha-D-glucosamine 6-phosphate (route II): step 2/2. The protein operates within nucleotide-sugar biosynthesis; UDP-N-acetyl-alpha-D-glucosamine biosynthesis; UDP-N-acetyl-alpha-D-glucosamine from N-acetyl-alpha-D-glucosamine 1-phosphate: step 1/1. Its pathway is bacterial outer membrane biogenesis; LPS lipid A biosynthesis. Its function is as follows. Catalyzes the last two sequential reactions in the de novo biosynthetic pathway for UDP-N-acetylglucosamine (UDP-GlcNAc). The C-terminal domain catalyzes the transfer of acetyl group from acetyl coenzyme A to glucosamine-1-phosphate (GlcN-1-P) to produce N-acetylglucosamine-1-phosphate (GlcNAc-1-P), which is converted into UDP-GlcNAc by the transfer of uridine 5-monophosphate (from uridine 5-triphosphate), a reaction catalyzed by the N-terminal domain. The chain is Bifunctional protein GlmU from Mycolicibacterium vanbaalenii (strain DSM 7251 / JCM 13017 / BCRC 16820 / KCTC 9966 / NRRL B-24157 / PYR-1) (Mycobacterium vanbaalenii).